The following is a 470-amino-acid chain: Metalloreductase STEAP4 (470 aa).

NADP(+) is bound by residues 27–30, 49–50, Tyr67, 81–85, Asn106, and Ala139; these read TGDF, SR, and MHREH. Trp140 and Asp148 together coordinate FAD. Arg171 is a binding site for NADP(+). 2 helical membrane-spanning segments follow: residues 202–224 and 236–256; these read FPFYLSSVLCVFFFVYCAIREVI and YRLAISIPNRVFPITALILLA. Tyr217 is a Fe(3+) binding site. The Ferric oxidoreductase domain occupies 247–395; sequence FPITALILLA…LGYLTLVLCT (149 aa). FAD contacts are provided by Gln269 and Arg290. A run of 2 helical transmembrane segments spans residues 293–313 and 342–362; these read LGLVALGFAFLHVIYTLVIPI and AWINDSYLALGILGFFLFLLL. His304 contributes to the heme b binding site. Tyr307 lines the Fe(3+) pocket. 2 residues coordinate FAD: Ser366 and Gln383. Transmembrane regions (helical) follow at residues 381–401 and 419–439; these read FVQSKLGYLTLVLCTAHTLVY and AYILALVIPCAVLVLKCILIM. Heme b is bound at residue His397.

It belongs to the STEAP family. As to quaternary structure, homotrimer. Interacts with PTK2/FAK1; the interaction may regulate PTK2 phosphorylation. Requires FAD as cofactor. It depends on heme b as a cofactor. In terms of tissue distribution, expressed in white and brown adipose tissues cells, as well as in muscle and liver cells. Detected in joints and spleens of arthritic mice.

Its subcellular location is the cell membrane. It localises to the golgi apparatus membrane. The protein localises to the early endosome membrane. The enzyme catalyses 2 Fe(2+) + NADP(+) + H(+) = 2 Fe(3+) + NADPH. It catalyses the reaction 2 Cu(+) + NADP(+) + H(+) = 2 Cu(2+) + NADPH. Its function is as follows. Integral membrane protein that functions as a NADPH-dependent ferric-chelate reductase, using NADPH from one side of the membrane to reduce a Fe(3+) chelate that is bound on the other side of the membrane. Mediates sequential transmembrane electron transfer from NADPH to FAD and onto heme, and finally to the Fe(3+) chelate. Can also reduce Cu(2+) to Cu(1+). Plays a role in systemic metabolic homeostasis, integrating inflammatory and metabolic responses. Associated with obesity and insulin-resistance. Involved in inflammatory arthritis, through the regulation of inflammatory cytokines. Inhibits anchorage-independent cell proliferation. The sequence is that of Metalloreductase STEAP4 (Steap4) from Mus musculus (Mouse).